A 625-amino-acid polypeptide reads, in one-letter code: Phosphomethylpyrimidine synthase (625 aa).

Substrate is bound by residues asparagine 230, methionine 259, tyrosine 288, histidine 324, 344-346 (SRG), 385-388 (DGLR), and glutamate 424. Residue histidine 428 coordinates Zn(2+). Tyrosine 451 lines the substrate pocket. Histidine 492 serves as a coordination point for Zn(2+). Positions 572, 575, and 580 each coordinate [4Fe-4S] cluster.

It belongs to the ThiC family. Homodimer. It depends on [4Fe-4S] cluster as a cofactor.

The catalysed reaction is 5-amino-1-(5-phospho-beta-D-ribosyl)imidazole + S-adenosyl-L-methionine = 4-amino-2-methyl-5-(phosphooxymethyl)pyrimidine + CO + 5'-deoxyadenosine + formate + L-methionine + 3 H(+). Its pathway is cofactor biosynthesis; thiamine diphosphate biosynthesis. Functionally, catalyzes the synthesis of the hydroxymethylpyrimidine phosphate (HMP-P) moiety of thiamine from aminoimidazole ribotide (AIR) in a radical S-adenosyl-L-methionine (SAM)-dependent reaction. The polypeptide is Phosphomethylpyrimidine synthase (Xanthomonas axonopodis pv. citri (strain 306)).